The chain runs to 99 residues: NADH-quinone oxidoreductase subunit K (99 aa).

3 helical membrane passes run 3–23 (PDNY…GVML), 28–48 (IVVF…FVTF), and 59–79 (VIAF…LGII).

This sequence belongs to the complex I subunit 4L family. In terms of assembly, NDH-1 is composed of 14 different subunits. Subunits NuoA, H, J, K, L, M, N constitute the membrane sector of the complex.

Its subcellular location is the cell membrane. It carries out the reaction a quinone + NADH + 5 H(+)(in) = a quinol + NAD(+) + 4 H(+)(out). Its function is as follows. NDH-1 shuttles electrons from NADH, via FMN and iron-sulfur (Fe-S) centers, to quinones in the respiratory chain. The immediate electron acceptor for the enzyme in this species is believed to be a menaquinone. Couples the redox reaction to proton translocation (for every two electrons transferred, four hydrogen ions are translocated across the cytoplasmic membrane), and thus conserves the redox energy in a proton gradient. The chain is NADH-quinone oxidoreductase subunit K from Mycobacteroides abscessus (strain ATCC 19977 / DSM 44196 / CCUG 20993 / CIP 104536 / JCM 13569 / NCTC 13031 / TMC 1543 / L948) (Mycobacterium abscessus).